A 476-amino-acid chain; its full sequence is Casein kinase 1-like protein 7 (476 aa).

One can recognise a Protein kinase domain in the interval 9 to 278 (FKLGKKIGSG…LKRLFRDLFI (270 aa)). ATP is bound by residues 15–23 (IGSGSFGEL) and Lys38. Asp128 functions as the Proton acceptor in the catalytic mechanism. Disordered stretches follow at residues 299–324 (GSSS…DPIE) and 340–464 (PGAV…TRED). The segment covering 357–367 (PRDRSRSRNSD) has biased composition (basic and acidic residues). Low complexity predominate over residues 382-422 (ANSSSRYRASSSRKAVAASSSRPSSAGGPSESRTSSRLVSS). Positions 423–432 (SGGGGSGSGN) are enriched in gly residues.

It belongs to the protein kinase superfamily. CK1 Ser/Thr protein kinase family. Casein kinase I subfamily. Monomer. Post-translationally, autophosphorylated.

Its subcellular location is the cytoplasm. The enzyme catalyses L-seryl-[protein] + ATP = O-phospho-L-seryl-[protein] + ADP + H(+). The catalysed reaction is L-threonyl-[protein] + ATP = O-phospho-L-threonyl-[protein] + ADP + H(+). Functionally, casein kinases are operationally defined by their preferential utilization of acidic proteins such as caseins as substrates. It can phosphorylate a large number of proteins. This Arabidopsis thaliana (Mouse-ear cress) protein is Casein kinase 1-like protein 7.